A 98-amino-acid chain; its full sequence is Integration host factor subunit beta (98 aa).

Belongs to the bacterial histone-like protein family. Heterodimer of an alpha and a beta chain.

Functionally, this protein is one of the two subunits of integration host factor, a specific DNA-binding protein that functions in genetic recombination as well as in transcriptional and translational control. The protein is Integration host factor subunit beta of Pseudomonas entomophila (strain L48).